Here is a 125-residue protein sequence, read N- to C-terminus: Protein ApaG (125 aa).

One can recognise an ApaG domain in the interval 1-125; it reads MIEQPRICVQ…FRLAIPALIH (125 aa).

This chain is Protein ApaG, found in Yersinia pestis bv. Antiqua (strain Antiqua).